The following is a 133-amino-acid chain: Profilin (133 aa).

It belongs to the profilin family.

More likely to influence phosphoinositide metabolism than actin assembly. The sequence is that of Profilin from Vaccinia virus (strain Tian Tan) (VACV).